Consider the following 357-residue polypeptide: Anthranilate phosphoribosyltransferase (357 aa).

5-phospho-alpha-D-ribose 1-diphosphate is bound by residues G94, G97–D98, T102, N104–T107, K122–S130, and G134. G94 lines the anthranilate pocket. S106 is a Mg(2+) binding site. N125 contributes to the anthranilate binding site. R180 is an anthranilate binding site. Residues D238 and E239 each contribute to the Mg(2+) site.

This sequence belongs to the anthranilate phosphoribosyltransferase family. In terms of assembly, homodimer. Requires Mg(2+) as cofactor.

It catalyses the reaction N-(5-phospho-beta-D-ribosyl)anthranilate + diphosphate = 5-phospho-alpha-D-ribose 1-diphosphate + anthranilate. Its pathway is amino-acid biosynthesis; L-tryptophan biosynthesis; L-tryptophan from chorismate: step 2/5. Functionally, catalyzes the transfer of the phosphoribosyl group of 5-phosphorylribose-1-pyrophosphate (PRPP) to anthranilate to yield N-(5'-phosphoribosyl)-anthranilate (PRA). The protein is Anthranilate phosphoribosyltransferase of Mycobacterium sp. (strain JLS).